The following is a 64-amino-acid chain: Large ribosomal subunit protein bL35 (64 aa).

Over residues 1–22 the composition is skewed to basic residues; the sequence is MPKMKSHTGMGKRVRVTGKGKI. The interval 1-28 is disordered; sequence MPKMKSHTGMGKRVRVTGKGKIVKQQAG.

This sequence belongs to the bacterial ribosomal protein bL35 family.

The protein is Large ribosomal subunit protein bL35 of Salinispora tropica (strain ATCC BAA-916 / DSM 44818 / JCM 13857 / NBRC 105044 / CNB-440).